The following is a 467-amino-acid chain: Asparagine--tRNA ligase (467 aa).

Belongs to the class-II aminoacyl-tRNA synthetase family. Homodimer.

It localises to the cytoplasm. The enzyme catalyses tRNA(Asn) + L-asparagine + ATP = L-asparaginyl-tRNA(Asn) + AMP + diphosphate + H(+). The chain is Asparagine--tRNA ligase from Glaesserella parasuis serovar 5 (strain SH0165) (Haemophilus parasuis).